Here is a 279-residue protein sequence, read N- to C-terminus: Putative pyruvate, phosphate dikinase regulatory protein (279 aa).

153-160 serves as a coordination point for ADP; sequence GISRTSKT.

This sequence belongs to the pyruvate, phosphate/water dikinase regulatory protein family. PDRP subfamily.

It catalyses the reaction N(tele)-phospho-L-histidyl/L-threonyl-[pyruvate, phosphate dikinase] + ADP = N(tele)-phospho-L-histidyl/O-phospho-L-threonyl-[pyruvate, phosphate dikinase] + AMP + H(+). The catalysed reaction is N(tele)-phospho-L-histidyl/O-phospho-L-threonyl-[pyruvate, phosphate dikinase] + phosphate + H(+) = N(tele)-phospho-L-histidyl/L-threonyl-[pyruvate, phosphate dikinase] + diphosphate. Bifunctional serine/threonine kinase and phosphorylase involved in the regulation of the pyruvate, phosphate dikinase (PPDK) by catalyzing its phosphorylation/dephosphorylation. The sequence is that of Putative pyruvate, phosphate dikinase regulatory protein from Brucella abortus (strain 2308).